We begin with the raw amino-acid sequence, 78 residues long: Acyl carrier protein (78 aa).

The region spanning 2–77 (STIEERVKKI…AAIDYVNSHK (76 aa)) is the Carrier domain. Ser37 carries the O-(pantetheine 4'-phosphoryl)serine modification.

The protein belongs to the acyl carrier protein (ACP) family. 4'-phosphopantetheine is transferred from CoA to a specific serine of apo-ACP by AcpS. This modification is essential for activity because fatty acids are bound in thioester linkage to the sulfhydryl of the prosthetic group.

The protein resides in the cytoplasm. Its pathway is lipid metabolism; fatty acid biosynthesis. In terms of biological role, carrier of the growing fatty acid chain in fatty acid biosynthesis. This Pseudomonas putida (strain GB-1) protein is Acyl carrier protein.